The primary structure comprises 1167 residues: ATP-dependent helicase/deoxyribonuclease subunit B (1167 aa).

The UvrD-like helicase ATP-binding domain maps to 1-359 (MSLRFLLGRS…IRQTEAYRDL (359 aa)). 8–15 (GRSGSGKT) lines the ATP pocket. One can recognise a UvrD-like helicase C-terminal domain in the interval 282–588 (ANRRHEDRAL…EFSLVPPAMD (307 aa)). [4Fe-4S] cluster contacts are provided by cysteine 804, cysteine 1126, cysteine 1129, and cysteine 1135.

Belongs to the helicase family. AddB/RexB type 1 subfamily. Heterodimer of AddA and AddB. It depends on Mg(2+) as a cofactor. [4Fe-4S] cluster serves as cofactor.

Functionally, the heterodimer acts as both an ATP-dependent DNA helicase and an ATP-dependent, dual-direction single-stranded exonuclease. Recognizes the chi site generating a DNA molecule suitable for the initiation of homologous recombination. The AddB subunit has 5' -&gt; 3' nuclease activity but not helicase activity. The polypeptide is ATP-dependent helicase/deoxyribonuclease subunit B (Geobacillus kaustophilus (strain HTA426)).